An 87-amino-acid polypeptide reads, in one-letter code: Transcriptional regulator PINT87aa (87 aa).

Interacts with PAF1 complex member PAF1. Interacts with transcription factor FOXM1. As to expression, expressed in brain, liver, kidney and stomach with lower levels in breast, intestine, thyroid and pancreas.

The protein resides in the nucleus. In terms of biological role, enhances the binding of the PAF1 complex to target gene promoters and plays a role in negative regulation of transcription. May function as an anchor to keep the PAF1 complex on target gene promoters, sequentially pausing RNA polymerase II-induced mRNA elongation. Inhibits FOXM1-mediated transcription of PHB2. The sequence is that of Transcriptional regulator PINT87aa from Homo sapiens (Human).